The following is a 196-amino-acid chain: Chromophore lyase CpcT/CpeT (196 aa).

Belongs to the CpcT/CpeT biliprotein lyase family.

Its function is as follows. Covalently attaches a chromophore to Cys residue(s) of phycobiliproteins. This chain is Chromophore lyase CpcT/CpeT, found in Synechococcus sp. (strain WH8020).